The following is a 101-amino-acid chain: MIPGELITDDGELELNAGRATVTVTVSNTGDRPVQVGSHYHFYEVNAALSFDREAARGFRLNIAAGTAVRFEPGQERTVELVALAGDRVVYGFNGKVMGKL.

This sequence belongs to the urease beta subunit family. Heterotrimer of UreA (gamma), UreB (beta) and UreC (alpha) subunits. Three heterotrimers associate to form the active enzyme.

It is found in the cytoplasm. The enzyme catalyses urea + 2 H2O + H(+) = hydrogencarbonate + 2 NH4(+). The protein operates within nitrogen metabolism; urea degradation; CO(2) and NH(3) from urea (urease route): step 1/1. This chain is Urease subunit beta, found in Paraburkholderia phymatum (strain DSM 17167 / CIP 108236 / LMG 21445 / STM815) (Burkholderia phymatum).